A 479-amino-acid chain; its full sequence is GMP reductase (479 aa).

CBS domains are found at residues valine 96 to isoleucine 153 and alanine 154 to serine 212. NADP(+) contacts are provided by residues aspartate 246–alanine 248 and glycine 296–glycine 298. The Thioimidate intermediate role is filled by cysteine 303.

This sequence belongs to the IMPDH/GMPR family. GuaB1 subfamily. The cofactor is a monovalent cation.

It carries out the reaction IMP + NH4(+) + NADP(+) = GMP + NADPH + 2 H(+). It functions in the pathway purine metabolism; IMP biosynthesis via salvage pathway. In terms of biological role, involved in the purine-salvage pathway. Catalyzes the NADPH-dependent conversion of GMP to IMP. In Mycobacterium bovis (strain ATCC BAA-935 / AF2122/97), this protein is GMP reductase.